Reading from the N-terminus, the 603-residue chain is Baeyer-Villiger monooxygenase (603 aa).

Residues Glu-94, 102–105, Asp-114, Tyr-120, and Val-164 each bind FAD; that span reads TWYW. 112 to 114 contributes to the NADP(+) binding site; it reads HCD. Residues 248 to 254, 271 to 272, and 386 to 387 contribute to the NADP(+) site; these read TGATGVQ, RT, and KR.

This sequence belongs to the FAD-binding monooxygenase family. Requires FAD as cofactor.

Functionally, catalyzes a Baeyer-Villiger oxidation reaction, i.e. the insertion of an oxygen atom into a carbon-carbon bond adjacent to a carbonyl, which converts ketones to esters or lactones using NADPH and/or NADH as an electron donor. Thus, can convert bicyclo[3.2.0]hept-2-en-6-one into the oxidative lactone products 2-oxabicyclo[3.3.0]oct-6-en-3-one and 3-oxabicyclo[3.3.0]oct-6-en-2-one. Is also able to catalyze the sulfoxidation of methyl phenyl sulfide (thioanisole). The chain is Baeyer-Villiger monooxygenase from Streptomyces coelicolor (strain ATCC BAA-471 / A3(2) / M145).